Consider the following 161-residue polypeptide: UPF0225 protein NTHI0386 (161 aa).

The protein belongs to the UPF0225 family.

In Haemophilus influenzae (strain 86-028NP), this protein is UPF0225 protein NTHI0386.